Reading from the N-terminus, the 355-residue chain is UDP-N-acetylglucosamine--N-acetylmuramyl-(pentapeptide) pyrophosphoryl-undecaprenol N-acetylglucosamine transferase (355 aa).

UDP-N-acetyl-alpha-D-glucosamine contacts are provided by residues 13–15 (TGG), N125, R162, S190, I244, and Q289.

Belongs to the glycosyltransferase 28 family. MurG subfamily.

The protein resides in the cell inner membrane. It catalyses the reaction di-trans,octa-cis-undecaprenyl diphospho-N-acetyl-alpha-D-muramoyl-L-alanyl-D-glutamyl-meso-2,6-diaminopimeloyl-D-alanyl-D-alanine + UDP-N-acetyl-alpha-D-glucosamine = di-trans,octa-cis-undecaprenyl diphospho-[N-acetyl-alpha-D-glucosaminyl-(1-&gt;4)]-N-acetyl-alpha-D-muramoyl-L-alanyl-D-glutamyl-meso-2,6-diaminopimeloyl-D-alanyl-D-alanine + UDP + H(+). It participates in cell wall biogenesis; peptidoglycan biosynthesis. Its function is as follows. Cell wall formation. Catalyzes the transfer of a GlcNAc subunit on undecaprenyl-pyrophosphoryl-MurNAc-pentapeptide (lipid intermediate I) to form undecaprenyl-pyrophosphoryl-MurNAc-(pentapeptide)GlcNAc (lipid intermediate II). The polypeptide is UDP-N-acetylglucosamine--N-acetylmuramyl-(pentapeptide) pyrophosphoryl-undecaprenol N-acetylglucosamine transferase (Neisseria meningitidis serogroup B (strain ATCC BAA-335 / MC58)).